The sequence spans 359 residues: Histidinol-phosphate aminotransferase 1 (359 aa).

N6-(pyridoxal phosphate)lysine is present on Lys216.

It belongs to the class-II pyridoxal-phosphate-dependent aminotransferase family. Histidinol-phosphate aminotransferase subfamily. Homodimer. It depends on pyridoxal 5'-phosphate as a cofactor.

It carries out the reaction L-histidinol phosphate + 2-oxoglutarate = 3-(imidazol-4-yl)-2-oxopropyl phosphate + L-glutamate. It participates in amino-acid biosynthesis; L-histidine biosynthesis; L-histidine from 5-phospho-alpha-D-ribose 1-diphosphate: step 7/9. This chain is Histidinol-phosphate aminotransferase 1 (hisC1), found in Caulobacter vibrioides (strain ATCC 19089 / CIP 103742 / CB 15) (Caulobacter crescentus).